The sequence spans 399 residues: Subtilisin-like protease 4 (399 aa).

The first 19 residues, 1–19 (MVCLKTLSVFLAAFAAADA), serve as a signal peptide directing secretion. Residues 20 to 118 (RAVFKTQGHK…VEQDQVVRIS (99 aa)) constitute a propeptide that is removed on maturation. One can recognise an Inhibitor I9 domain in the interval 38–117 (YIVVMKDGVS…YVEQDQVVRI (80 aa)). An N-linked (GlcNAc...) asparagine glycan is attached at Asn102. Residues 128–399 (SWGLGRVSHR…NRLLYNGSGQ (272 aa)) enclose the Peptidase S8 domain. Active-site charge relay system residues include Asp160 and His191. Residues Asn252 and Asn308 are each glycosylated (N-linked (GlcNAc...) asparagine). Ser346 serves as the catalytic Charge relay system. Asn395 carries N-linked (GlcNAc...) asparagine glycosylation.

Belongs to the peptidase S8 family.

It is found in the secreted. Its function is as follows. Secreted subtilisin-like serine protease with keratinolytic activity that contributes to pathogenicity. The sequence is that of Subtilisin-like protease 4 (SUB4) from Trichophyton rubrum (Athlete's foot fungus).